A 1183-amino-acid polypeptide reads, in one-letter code: Rab11 family-interacting protein 3 (1183 aa).

The tract at residues 423–448 (AEDPSTESLPRKNGQEESKSALPVST) is disordered. Over residues 431 to 441 (LPRKNGQEESK) the composition is skewed to basic and acidic residues. 2 consecutive EF-hand domains span residues 706–741 (EEQS…YGAE) and 738–773 (YGAE…ISNE). Ca(2+) is bound by residues D719, D721, D723, E730, D751, S753, and D762. Residues 902–1121 (ELEKDSLESE…NGQIINLSIQ (220 aa)) are a coiled coil. The interval 911-1015 (EEQHARLRQE…LQDEADDITQ (105 aa)) is ARF-binding domain (ABD). The interval 1005–1044 (KLQDEADDITQRLNEESESRRKMSDKLSHERHTNQKEKEC) is disordered. The FIP-RBD domain maps to 1121 to 1183 (QGAKSLFTES…ESNPSILEVK (63 aa)).

The protein resides in the recycling endosome membrane. Its subcellular location is the cytoplasm. It localises to the cytoskeleton. The protein localises to the microtubule organizing center. It is found in the centrosome. The protein resides in the cleavage furrow. Its subcellular location is the midbody. It localises to the golgi apparatus membrane. The protein localises to the golgi apparatus. It is found in the trans-Golgi network membrane. In terms of biological role, downstream effector molecule for Rab11 GTPase which acts as a regulator of endocytic trafficking, cytokinesis and intracellular ciliogenesis by participating in membrane delivery. This Danio rerio (Zebrafish) protein is Rab11 family-interacting protein 3 (rab11fip3).